Reading from the N-terminus, the 84-residue chain is Large ribosomal subunit protein bL31B-2 (84 aa).

Belongs to the bacterial ribosomal protein bL31 family. Type B subfamily. Part of the 50S ribosomal subunit.

In Streptomyces coelicolor (strain ATCC BAA-471 / A3(2) / M145), this protein is Large ribosomal subunit protein bL31B-2.